The sequence spans 129 residues: Large ribosomal subunit protein bL21 (129 aa).

Residues 102 to 129 (TDNAKPTKGPRPKKEKVAKEATKEDAAA) are disordered. The segment covering 116–129 (EKVAKEATKEDAAA) has biased composition (basic and acidic residues).

Belongs to the bacterial ribosomal protein bL21 family. In terms of assembly, part of the 50S ribosomal subunit. Contacts protein L20.

Functionally, this protein binds to 23S rRNA in the presence of protein L20. This is Large ribosomal subunit protein bL21 from Bradyrhizobium diazoefficiens (strain JCM 10833 / BCRC 13528 / IAM 13628 / NBRC 14792 / USDA 110).